A 380-amino-acid polypeptide reads, in one-letter code: DNA replication and repair protein RecF (380 aa).

30–37 (GNNAQGKS) is an ATP binding site.

The protein belongs to the RecF family.

Its subcellular location is the cytoplasm. In terms of biological role, the RecF protein is involved in DNA metabolism; it is required for DNA replication and normal SOS inducibility. RecF binds preferentially to single-stranded, linear DNA. It also seems to bind ATP. In Rippkaea orientalis (strain PCC 8801 / RF-1) (Cyanothece sp. (strain PCC 8801)), this protein is DNA replication and repair protein RecF.